Consider the following 209-residue polypeptide: High frequency lysogenization protein HflD homolog (209 aa).

This sequence belongs to the HflD family.

Its subcellular location is the cytoplasm. It is found in the cell inner membrane. In Marinomonas sp. (strain MWYL1), this protein is High frequency lysogenization protein HflD homolog.